The chain runs to 279 residues: Digeranylgeranylglyceryl phosphate synthase (279 aa).

8 helical membrane-spanning segments follow: residues 5–25 (GFFA…AIVA), 27–47 (LIAT…VLLV), 90–110 (FLLG…IALV), 127–147 (FFGN…GGAY), 148–168 (AGWH…LAML), 198–218 (KTAL…AVPY), 219–239 (LWWG…ILFA), and 259–279 (TLLK…AVFL).

This sequence belongs to the UbiA prenyltransferase family. DGGGP synthase subfamily. Mg(2+) serves as cofactor.

Its subcellular location is the cell membrane. The enzyme catalyses sn-3-O-(geranylgeranyl)glycerol 1-phosphate + (2E,6E,10E)-geranylgeranyl diphosphate = 2,3-bis-O-(geranylgeranyl)-sn-glycerol 1-phosphate + diphosphate. It functions in the pathway membrane lipid metabolism; glycerophospholipid metabolism. Its function is as follows. Prenyltransferase that catalyzes the transfer of the geranylgeranyl moiety of geranylgeranyl diphosphate (GGPP) to the C2 hydroxyl of (S)-3-O-geranylgeranylglyceryl phosphate (GGGP). This reaction is the second ether-bond-formation step in the biosynthesis of archaeal membrane lipids. This chain is Digeranylgeranylglyceryl phosphate synthase, found in Methanoregula boonei (strain DSM 21154 / JCM 14090 / 6A8).